A 217-amino-acid polypeptide reads, in one-letter code: MOB kinase activator 3A (217 aa).

Positions 83, 88, 165, and 170 each coordinate Zn(2+).

It belongs to the MOB1/phocein family.

In terms of biological role, may regulate the activity of kinases. This is MOB kinase activator 3A (Mob3a) from Mus musculus (Mouse).